Here is a 208-residue protein sequence, read N- to C-terminus: Platelet glycoprotein Ib beta chain (208 aa).

The signal sequence occupies residues 1-26 (MGSGPRGAVSLLLLMLAPPSCPAADC). 2 cysteine pairs are disulfide-bonded: Cys-26–Cys-32 and Cys-30–Cys-39. Positions 27 to 55 (PAPCSCAGTLVDCGRRGLTWASLPTSFPV) constitute an LRRNT domain. Topologically, residues 27 to 147 (PAPCSCAGTL…RAACAPGPLC (121 aa)) are extracellular. An LRR repeat occupies 60-83 (LVLTGNNLTALPSGLLDALPAVRT). An N-linked (GlcNAc...) asparagine glycan is attached at Asn-66. The 55-residue stretch at 89 to 143 (NPWRCDCRLVPLRAWLAGRPERAPYRDLRCVAPPAVRGRLLPYLAEDDVRAACAP) folds into the LRRCT domain. Cystine bridges form between Cys-93–Cys-118 and Cys-95–Cys-141. Residues 148–172 (WGALAAELALLGLGLLHALLLVLLL) traverse the membrane as a helical segment. Residues 173-208 (CRLRRLRARARARARAALRLSLTDPLVAEQDGTDES) are Cytoplasmic-facing. Ser-193 carries the post-translational modification Phosphoserine; by PKA. Thr-195 is subject to Phosphothreonine.

As to quaternary structure, two GP-Ib beta are disulfide-linked to one GP-Ib alpha. GP-IX is complexed with the GP-Ib heterodimer via a non covalent linkage. Interacts with TRAF4.

The protein resides in the membrane. In terms of biological role, gp-Ib, a surface membrane protein of platelets, participates in the formation of platelet plugs by binding to von Willebrand factor, which is already bound to the subendothelium. In Papio cynocephalus (Yellow baboon), this protein is Platelet glycoprotein Ib beta chain (GP1BB).